Here is a 368-residue protein sequence, read N- to C-terminus: Chorismate synthase (368 aa).

Arginine 46 lines the NADP(+) pocket. FMN is bound by residues arginine 124–serine 126, glycine 284, lysine 299–serine 303, and arginine 326.

It belongs to the chorismate synthase family. FMNH2 is required as a cofactor.

The catalysed reaction is 5-O-(1-carboxyvinyl)-3-phosphoshikimate = chorismate + phosphate. It participates in metabolic intermediate biosynthesis; chorismate biosynthesis; chorismate from D-erythrose 4-phosphate and phosphoenolpyruvate: step 7/7. Its function is as follows. Catalyzes the anti-1,4-elimination of the C-3 phosphate and the C-6 proR hydrogen from 5-enolpyruvylshikimate-3-phosphate (EPSP) to yield chorismate, which is the branch point compound that serves as the starting substrate for the three terminal pathways of aromatic amino acid biosynthesis. This reaction introduces a second double bond into the aromatic ring system. In Pyrobaculum aerophilum (strain ATCC 51768 / DSM 7523 / JCM 9630 / CIP 104966 / NBRC 100827 / IM2), this protein is Chorismate synthase.